Reading from the N-terminus, the 7094-residue chain is Replicase polyprotein 1ab (7094 aa).

In terms of domain architecture, CoV Nsp1 globular spans 54–196 (PENHVMVDCR…PWVMYLRKCG (143 aa)). The 31-residue stretch at 216-246 (FKVEDAYDLVHDEPKGKFSKKAYALIRGYRG) folds into the BetaCoV Nsp1 C-terminal domain. The CoV Nsp2 N-terminal domain occupies 250–519 (LLYVDQYGCD…LICKALYLDY (270 aa)). Zn(2+)-binding residues include cysteine 392, cysteine 397, cysteine 413, and cysteine 416. The interval 392-416 (CEQDLCDFKGWVPGNMIDGFACTTC) is C4. Positions 524–713 (CGNLHQRELL…AQAFRSVAKV (190 aa)) constitute a CoV Nsp2 middle domain. A CoV Nsp2 C-terminal domain is found at 733 to 851 (RRRICLSGSK…LDQAWRVPCA (119 aa)). Residues 853 to 966 (RCVTFKEQPT…LYCAFTAPED (114 aa)) enclose the Ubiquitin-like 1 domain. The segment covering 972–986 (ESGVEEDDVEGEETD) has biased composition (acidic residues). Residues 972–992 (ESGVEEDDVEGEETDLTVTSA) form a disordered region. In terms of domain architecture, Peptidase C16 1 spans 1036 to 1274 (DLESVIQDYE…IAQLYGSCIT (239 aa)). Cysteine 1074 functions as the For PL1-PRO activity in the catalytic mechanism. Zn(2+) is bound by residues cysteine 1151, cysteine 1154, cysteine 1177, and cysteine 1179. Residues 1151–1179 (CIKCDLALKLKGLDAMFFYGDVVSHVCKC) form a C4-type 1 zinc finger. Catalysis depends on for PL1-PRO activity residues histidine 1225 and aspartate 1236. The 161-residue stretch at 1275 to 1435 (PNVCFVKGDI…LISKCQITAV (161 aa)) folds into the Macro domain. Residues 1491–1563 (DDARTFVQSN…VAQIKALFLD (73 aa)) enclose the DPUP domain. A Ubiquitin-like 2 domain is found at 1562–1617 (LDKVDILLTVDGVNFTNRFVPVGESFGKSLGNVFCDGVNVTKHKCDINYKGKVFFQ). A Peptidase C16 2 domain is found at 1631–1892 (SSFNFDQKEL…KIEYKPDLSQ (262 aa)). The active-site For PL2-PRO activity is the cysteine 1671. Zn(2+)-binding residues include cysteine 1749, cysteine 1751, cysteine 1783, and cysteine 1785. The C4-type 2 zinc finger occupies 1749-1785 (CKCGVKQEQRTGVDAVMHFGTLSREDLEIGYTVDCSC). Active-site for PL2-PRO activity residues include histidine 1828 and aspartate 1842. In terms of domain architecture, Nucleic acid-binding spans 1906–2007 (IKAQFKTFEK…TYFNRPLLVD (102 aa)). Residues 2020–2169 (DDGGDISESD…ADNKVIYTTE (150 aa)) enclose the G2M domain. Transmembrane regions (helical) follow at residues 2138–2158 (ISACFNFIKWLFVLLFGWIKI), 2199–2219 (ACIIATIFLLWFNFIYANVIF), and 2221–2241 (DFYLPKIGFLPTFVGKIAQWI). Residues 2138 to 2385 (ISACFNFIKW…ASFIKLFSLF (248 aa)) form an HD1 region. The region spanning 2235–2296 (GKIAQWIKNT…AIDVVQYEAD (62 aa)) is the 3Ecto domain. 2 disulfides stabilise this stretch: cysteine 2251/cysteine 2275 and cysteine 2266/cysteine 2272. 3 helical membrane-spanning segments follow: residues 2313–2333 (LIVSYALYTAWFYPLFALISI), 2343–2363 (LFMLSTLHWSVRLLVSLANML), and 2365–2385 (AHVFMRFYIIIASFIKLFSLF). Residues 2383–2473 (SLFRHVAYGC…ELKRPIQPTD (91 aa)) form a Y1 region. Residues 2383–2750 (SLFRHVAYGC…LTTPFSLKGG (368 aa)) enclose the CoV Nsp3 Y domain. Zn(2+) contacts are provided by histidine 2387, cysteine 2392, cysteine 2397, cysteine 2400, cysteine 2433, histidine 2436, cysteine 2440, and cysteine 2443. Residues 2387 to 2400 (HVAYGCSKSGCLFC) form a ZF1 region. The tract at residues 2433–2443 (CSKHQWNCIDC) is ZF2. The segment at 2474-2566 (VAYHTVTDVK…MVDKNLITTA (93 aa)) is Y2. Residues 2474 to 2750 (VAYHTVTDVK…LTTPFSLKGG (277 aa)) form a coV-Y region. Positions 2567-2649 (NTGTSVTETM…DSVMSAVSAG (83 aa)) are Y3. A Y4 region spans residues 2650–2750 (LELTDESCNN…LTTPFSLKGG (101 aa)). The next 5 membrane-spanning stretches (helical) occupy residues 2752–2772 (VFSYFVYVCFVLSLVCFIGLW), 3031–3051 (ASSIAGAILAVIVVLVFYYLI), 3063–3083 (IVFVNVIVWCVNFMMLFVFQV), 3090–3110 (VYAICYFYATLYFPSEISVIM), and 3115–3135 (LVMYGTIMPLWFCLLYISVVV). The interval 2752–3135 (VFSYFVYVCF…FCLLYISVVV (384 aa)) is HD2. A Nsp4C domain is found at 3149–3246 (LGTSVRSDGT…TASVSTSFLQ (98 aa)). A Peptidase C30 domain is found at 3247–3549 (SGIVKMVNPT…YQQLAGIKLQ (303 aa)). Residues histidine 3287 and cysteine 3391 each act as for 3CL-PRO activity in the active site. 7 consecutive transmembrane segments (helical) span residues 3558 to 3578 (GIVCWIMASTFLFSCIITAFV), 3588 to 3608 (TNMLSITFCALCVISLTMLLV), 3615 to 3635 (LTMYIIPVLFTLLYNNYLVVY), 3657 to 3677 (TYTDEVIYGMLLLIGMVFVTL), 3684 to 3704 (LFSFIMFVGRVISVVSLWYMG), 3711 to 3731 (ILLMLASLFGTYTWTTALSMA), and 3755 to 3775 (IVLVCYLFIGYIISCYWGLFS). The HD3 stretch occupies residues 3558-3775 (GIVCWIMAST…IISCYWGLFS (218 aa)). The 89-residue stretch at 3837–3925 (SKLTDVKCAN…DYAKDNTVLQ (89 aa)) folds into the RdRp Nsp7 cofactor domain. One can recognise a RdRp Nsp8 cofactor domain in the interval 3926–4122 (ALQSEFVNMA…HNEVSATALQ (197 aa)). The 110-residue stretch at 4123 to 4232 (NNELMPAKLK…GTISSTVRLQ (110 aa)) folds into the Nsp9 ssRNA-binding domain. An ExoN/MTase coactivator domain is found at 4233–4370 (AGTATEYASN…CVSTDTTVQS (138 aa)). The Zn(2+) site is built by cysteine 4306, cysteine 4309, histidine 4315, cysteine 4322, cysteine 4348, cysteine 4351, cysteine 4359, and cysteine 4361. Zinc fingers lie at residues 4306 to 4322 (CIYCRARVEHPDVDGLC) and 4348 to 4361 (CQVCGFWRDGSCSC). A NiRAN domain is found at 4375–4630 (FLNRVRGTSV…DCELYVNNAY (256 aa)). Residues asparagine 4578 and aspartate 4587 each coordinate Mn(2+). The Nsp12 Interface domain maps to 4631–4729 (RLFDLVQYDF…MNMDVDTHRY (99 aa)). The Zn(2+) site is built by histidine 4660, cysteine 4666, cysteine 4671, cysteine 4675, and cysteine 4852. Residues 4730–5297 (RLSLKDLLLY…NMYLRSAVMQ (568 aa)) enclose the Nsp12 RNA-dependent RNA polymerase domain. The interval 4732–4946 (SLKDLLLYAA…HQKCLKSIAA (215 aa)) is rdRp Fingers N-ter. The segment at 4947-4985 (TRGVPVVIGTTKFYGGWDDMLRRLIKDVDNPVLMGWDYP) is rdRp Palm N-ter. In terms of domain architecture, RdRp catalytic spans 4977 to 5139 (PVLMGWDYPK…CYNSDYASKG (163 aa)). The segment at 4986-5044 (KCDRAMPNILRIVSSLVLARKHEACCSQSDRFYRLANEYAQVLSEIVMCGGCYYVKPGG) is rdRp Fingers C-ter. Positions 5007, 5010, and 5011 each coordinate Zn(2+). The interval 5045-5180 (TSSGDATTAF…NNGPHEFCSQ (136 aa)) is rdRp Palm C-ter. Active-site residues include serine 5124, aspartate 5125, and aspartate 5126. Residues 5181 to 5297 (HTMLVKMDGD…NMYLRSAVMQ (117 aa)) form a rdRp Thumb region. The CV ZBD domain maps to 5298-5410 (SVGACVVCSS…DDFNRIASCK (113 aa)). Cysteine 5302, cysteine 5305, cysteine 5313, cysteine 5316, cysteine 5323, cysteine 5326, histidine 5330, histidine 5336, cysteine 5347, cysteine 5352, cysteine 5369, and histidine 5372 together coordinate Zn(2+). In terms of domain architecture, (+)RNA virus helicase ATP-binding spans 5553–5734 (SVLETFQNNV…MCCLGPDIFL (182 aa)). 5578–5585 (GPPGTGKS) contributes to the ATP binding site. In terms of domain architecture, (+)RNA virus helicase C-terminal spans 5735 to 5904 (GTCYRCPKEI…VETRVQCSTN (170 aa)). Residues 5971–6186 (LFITKEEAVK…RCLAVYDCFC (216 aa)) enclose the ExoN domain. Active-site residues include aspartate 5989, glutamate 5991, and glutamate 6090. Positions 6106, 6109, 6125, 6128, 6156, 6160, and 6163 each coordinate Zn(2+). Residues histidine 6167 and aspartate 6172 contribute to the active site. Residue cysteine 6178 participates in Zn(2+) binding. One can recognise an N7-MTase domain in the interval 6195-6421 (YPIISNELSI…NLWNTFTKLQ (227 aa)). 6230-6236 (DIGNPKA) serves as a coordination point for S-adenosyl-L-methionine. The gpppA-binding stretch occupies residues 6308-6322 (CNGGSLYVNKHAFHT). Cysteine 6346, cysteine 6367, cysteine 6378, and histidine 6381 together coordinate Zn(2+). One can recognise a Nsp15 N-terminal oligomerization domain in the interval 6422-6482 (SLENVVYNLV…NVAVELFAKR (61 aa)). The 121-residue stretch at 6483 to 6603 (SIRHHPELKL…FAVRKEGQDV (121 aa)) folds into the AV-Nsp11N/CoV-Nsp15M domain. The NendoU domain maps to 6653-6792 (TCRTDMEKDF…NDEKVMTFYL (140 aa)). Catalysis depends on residues histidine 6683, histidine 6698, lysine 6738, lysine 6841, aspartate 6925, lysine 6965, and glutamate 6998. The 295-residue stretch at 6797-7091 (ASDWKPGYSM…KEVFVGDSMV (295 aa)) folds into the Nidovirus-type SAM-dependent 2'-O-MTase domain.

This sequence belongs to the coronaviruses polyprotein 1ab family. In terms of assembly, interacts with host PHB and PHB2. As to quaternary structure, interacts with papain-like protease nsp3 and non-structural protein 6. Monomer. Homodimer. Only the homodimer shows catalytic activity. In terms of assembly, interacts with nsp8 and nsp12 to form the replication-transcription complex (RTC): nsp12, nsp7, two subunits of nsp8, and up to two subunits of nsp13. As to quaternary structure, interacts with nsp7, nsp13 and nsp12 to form the replication-transcription complex (RTC): nsp12, nsp7, two subunits of nsp8, and up to two subunits of nsp13. Interacts with nsp12. In terms of assembly, interacts with proofreading exoribonuclease nsp14 and 2'-O-methyltransferase nsp16; these interactions enhance nsp14 and nsp16 enzymatic activities. As to quaternary structure, interacts with nsp7 and nsp8 to form the replication-transcription complex (RTC): nsp12, nsp7, two subunits of nsp8, and up to two subunits of nsp13. Interacts with nsp9. Interacts with nsp8 to form the replication-transcription complex (RTC): nsp12, nsp7, two subunits of nsp8, and up to two subunits of nsp13. The cofactor is Mn(2+). Mg(2+) is required as a cofactor. Post-translationally, specific enzymatic cleavages in vivo by its own proteases yield mature proteins. 3CL-PRO and PL-PRO proteinases are autocatalytically processed.

The protein localises to the host membrane. It is found in the host cytoplasm. Its subcellular location is the host perinuclear region. It localises to the host endoplasmic reticulum-Golgi intermediate compartment. The catalysed reaction is RNA(n) + a ribonucleoside 5'-triphosphate = RNA(n+1) + diphosphate. The enzyme catalyses ATP + H2O = ADP + phosphate + H(+). It carries out the reaction Thiol-dependent hydrolysis of ester, thioester, amide, peptide and isopeptide bonds formed by the C-terminal Gly of ubiquitin (a 76-residue protein attached to proteins as an intracellular targeting signal).. It catalyses the reaction a 5'-end (N(7)-methyl 5'-triphosphoguanosine)-ribonucleoside in mRNA + S-adenosyl-L-methionine = a 5'-end (N(7)-methyl 5'-triphosphoguanosine)-(2'-O-methyl-ribonucleoside) in mRNA + S-adenosyl-L-homocysteine + H(+). The catalysed reaction is uridylyl-uridylyl-ribonucleotide-RNA = a 3'-end uridylyl-2',3'-cyclophospho-uridine-RNA + a 5'-end dephospho-ribonucleoside-RNA. The enzyme catalyses a 5'-end diphospho-ribonucleoside in mRNA + GTP + H(+) = a 5'-end (5'-triphosphoguanosine)-ribonucleoside in mRNA + diphosphate. It carries out the reaction a 5'-end (5'-triphosphoguanosine)-ribonucleoside in mRNA + S-adenosyl-L-methionine = a 5'-end (N(7)-methyl 5'-triphosphoguanosine)-ribonucleoside in mRNA + S-adenosyl-L-homocysteine. Its function is as follows. The replicase polyprotein of coronaviruses is a multifunctional protein: it contains the activities necessary for the transcription of negative stranded RNA, leader RNA, subgenomic mRNAs and progeny virion RNA as well as proteinases responsible for the cleavage of the polyprotein into functional products. Functionally, inhibits host translation by interacting with the 40S ribosomal subunit. The nsp1-40S ribosome complex further induces an endonucleolytic cleavage near the 5'UTR of host mRNAs, targeting them for degradation. Viral mRNAs are not susceptible to nsp1-mediated endonucleolytic RNA cleavage thanks to the presence of a 5'-end leader sequence and are therefore protected from degradation. By suppressing host gene expression, nsp1 facilitates efficient viral gene expression in infected cells and evasion from host immune response. May play a role in the modulation of host cell survival signaling pathway by interacting with host PHB and PHB2. Indeed, these two proteins play a role in maintaining the functional integrity of the mitochondria and protecting cells from various stresses. In terms of biological role, responsible for the cleavages located at the N-terminus of the replicase polyprotein. In addition, PL-PRO possesses a deubiquitinating/deISGylating activity and processes both 'Lys-48'- and 'Lys-63'-linked polyubiquitin chains from cellular substrates. Participates together with nsp4 in the assembly of virally-induced cytoplasmic double-membrane vesicles necessary for viral replication. Antagonizes innate immune induction of type I interferon by blocking the phosphorylation, dimerization and subsequent nuclear translocation of host IRF3. Also prevents host NF-kappa-B signaling. Its function is as follows. Participates in the assembly of virally-induced cytoplasmic double-membrane vesicles necessary for viral replication. Functionally, cleaves the C-terminus of replicase polyprotein at 11 sites. Recognizes substrates containing the core sequence [ILMVF]-Q-|-[SGACN]. Also able to bind an ADP-ribose-1''-phosphate (ADRP). Plays a role in the initial induction of autophagosomes from host endoplasmic reticulum. Later, limits the expansion of these phagosomes that are no longer able to deliver viral components to lysosomes. In terms of biological role, forms a hexadecamer with nsp8 (8 subunits of each) that may participate in viral replication by acting as a primase. Alternatively, may synthesize substantially longer products than oligonucleotide primers. Its function is as follows. Forms a hexadecamer with nsp7 (8 subunits of each) that may participate in viral replication by acting as a primase. Alternatively, may synthesize substantially longer products than oligonucleotide primers. Functionally, forms a primer, NSP9-pU, which is utilized by the polymerase for the initiation of RNA chains. Interacts with ribosome signal recognition particle RNA (SRP). Together with NSP8, suppress protein integration into the cell membrane, thereby disrupting host immune defenses. Plays a pivotal role in viral transcription by stimulating both nsp14 3'-5' exoribonuclease and nsp16 2'-O-methyltransferase activities. Therefore plays an essential role in viral mRNAs cap methylation. In terms of biological role, RNA-directed RNA polymerase that catalyzes the transcription of viral genomic and subgenomic RNAs. Acts in complex with nsp7 and nsp8 to transcribe both the minus and positive strands of genomic RNA. The kinase-like NiRAN domain of NSP12 attaches one or more nucleotides to the amino terminus of NSP9, forming a covalent RNA-protein intermediate that serves as transcription/replication primer. Subgenomic RNAs (sgRNAs) are formed by discontinuous transcription: The polymerase has the ability to pause at transcription-regulating sequences (TRS) and jump to the leader TRS, resulting in a major deletion. This creates a series of subgenomic RNAs that are replicated, transcribed and translated. In addition, Nsp12 is a subunit of the viral RNA capping enzyme that catalyzes the RNA guanylyltransferase reaction for genomic and sub-genomic RNAs. Subsequently, the NiRAN domain transfers RNA to GDP, and forms the core cap structure GpppA-RNA. Its function is as follows. Multi-functional protein with a zinc-binding domain in N-terminus displaying RNA and DNA duplex-unwinding activities with 5' to 3' polarity. Activity of helicase is dependent on magnesium. Functionally, plays a role in viral RNA synthesis through two distinct activities. The N7-guanine methyltransferase activity plays a role in the formation of the cap structure GpppA-RNA. The proofreading exoribonuclease reduces the sensitivity of the virus to RNA mutagens during replication. This activity acts on both ssRNA and dsRNA in a 3'-5' direction. Plays a role in viral transcription/replication and prevents the simultaneous activation of host cell dsRNA sensors, such as MDA5/IFIH1, OAS, and PKR. Acts by degrading the 5'-polyuridines generated during replication of the poly(A) region of viral genomic and subgenomic RNAs. Catalyzes a two-step reaction in which a 2'3'-cyclic phosphate (2'3'-cP) is first generated by 2'-O transesterification, which is then hydrolyzed to a 3'-phosphate (3'-P). If not degraded, poly(U) RNA would hybridize with poly(A) RNA tails and activate host dsRNA sensors. In terms of biological role, methyltransferase that mediates mRNA cap 2'-O-ribose methylation to the 5'-cap structure of viral mRNAs. N7-methyl guanosine cap is a prerequisite for binding of nsp16. Therefore plays an essential role in viral mRNAs cap methylation which is essential to evade immune system. The chain is Replicase polyprotein 1ab (rep) from Bos taurus (Bovine).